A 710-amino-acid polypeptide reads, in one-letter code: Polyribonucleotide nucleotidyltransferase (710 aa).

Asp489 and Asp495 together coordinate Mg(2+). A KH domain is found at 556–615; that stretch reads PKIDTIKIDVDKIKVVIGKGGETIDKIIAETGVKIDIDDEGNVSIYSSDQAAIDRTKEII. The S1 motif domain maps to 625–693; sequence GEVYHAKVVR…EKGRVDASMK (69 aa). The disordered stretch occupies residues 691–710; it reads SMKALIPRPPKPEKKEEKHD. Basic and acidic residues predominate over residues 700 to 710; it reads PKPEKKEEKHD.

It belongs to the polyribonucleotide nucleotidyltransferase family. It depends on Mg(2+) as a cofactor.

It localises to the cytoplasm. The enzyme catalyses RNA(n+1) + phosphate = RNA(n) + a ribonucleoside 5'-diphosphate. In terms of biological role, involved in mRNA degradation. Catalyzes the phosphorolysis of single-stranded polyribonucleotides processively in the 3'- to 5'-direction. The chain is Polyribonucleotide nucleotidyltransferase from Streptococcus pyogenes serotype M1.